A 349-amino-acid polypeptide reads, in one-letter code: Lachesin (349 aa).

Residues 1 to 18 (MDLRLYTIFVGFFSVVYA) form the signal peptide. An Ig-like V-type domain is found at 22 to 127 (PTISYISQEQ…NKITAEVDLQ (106 aa)). Residues Cys43 and Cys110 are joined by a disulfide bond. Ig-like C2-type domains are found at residues 132–218 (PVIS…IAVE) and 222–315 (PPVI…VELF). N-linked (GlcNAc...) asparagine glycosylation occurs at Asn137. 2 disulfides stabilise this stretch: Cys154/Cys201 and Cys244/Cys299. Gly332 is lipidated: GPI-anchor amidated glycine. The propeptide at 333–349 (DAAEISTSMALILISTI) is removed in mature form.

The N-terminus is blocked. Expressed by all neurogenic cells early, but only those cells that become neuroblasts continue to express it. Expressed by neuroblasts, ganglion mother cells and neurons early in their lives, but expression becomes restricted to a subset of neurons as development progresses. Expressed by sensory neurons as they delaminate from the body wall ectoderm. It is also present on growing axons of the CNS and PNS and becomes restricted to a subset of axons later in development.

The protein localises to the cell membrane. Its function is as follows. May play a role in early neuronal differentiation and axon outgrowth. The protein is Lachesin (LAC) of Schistocerca americana (American grasshopper).